Here is a 385-residue protein sequence, read N- to C-terminus: S-adenosylmethionine synthase (385 aa).

His-16 is an ATP binding site. Position 18 (Asp-18) interacts with Mg(2+). Glu-44 provides a ligand contact to K(+). 2 residues coordinate L-methionine: Glu-57 and Gln-100. The segment at 100-110 (QSPDINQGVDK) is flexible loop. ATP contacts are provided by residues 165 to 167 (DAK), 231 to 232 (RF), Asp-240, 246 to 247 (RK), Ala-263, and Lys-267. Asp-240 is a binding site for L-methionine. Lys-271 is an L-methionine binding site.

This sequence belongs to the AdoMet synthase family. Homotetramer; dimer of dimers. It depends on Mg(2+) as a cofactor. Requires K(+) as cofactor.

It is found in the cytoplasm. The enzyme catalyses L-methionine + ATP + H2O = S-adenosyl-L-methionine + phosphate + diphosphate. It participates in amino-acid biosynthesis; S-adenosyl-L-methionine biosynthesis; S-adenosyl-L-methionine from L-methionine: step 1/1. Its function is as follows. Catalyzes the formation of S-adenosylmethionine (AdoMet) from methionine and ATP. The overall synthetic reaction is composed of two sequential steps, AdoMet formation and the subsequent tripolyphosphate hydrolysis which occurs prior to release of AdoMet from the enzyme. The chain is S-adenosylmethionine synthase from Vibrio cholerae serotype O1 (strain ATCC 39315 / El Tor Inaba N16961).